Here is a 229-residue protein sequence, read N- to C-terminus: Auxin-responsive protein IAA17 (229 aa).

Positions 14–18 (LCLGL) match the EAR-like (transcriptional repression) motif. The 102-residue stretch at 110 to 211 (AAFVKVSMDG…TCKRLRLMKG (102 aa)) folds into the PB1 domain.

This sequence belongs to the Aux/IAA family. In terms of assembly, homodimers and heterodimers. Interacts with the auxin response factors ARF1 and IAA24. Interacts with IAA1. Interacts with TPL. Interacts (via PB1 domain) with ARF7 (via PB1 domain). In terms of processing, phosphorylated by phytochrome A in vitro.

The protein resides in the nucleus. Functionally, aux/IAA proteins are short-lived transcriptional factors that function as repressors of early auxin response genes at low auxin concentrations. Repression is thought to result from the interaction with auxin response factors (ARFs), proteins that bind to the auxin-responsive promoter element (AuxRE). Formation of heterodimers with ARF proteins may alter their ability to modulate early auxin response genes expression. In Arabidopsis thaliana (Mouse-ear cress), this protein is Auxin-responsive protein IAA17 (IAA17).